We begin with the raw amino-acid sequence, 55 residues long: Protein CADMIUM TOLERANCE 1 (55 aa).

Residues 24–40 (GCLYACIFTALCCFCCY) traverse the membrane as a helical segment.

This sequence belongs to the CYSTM1 family.

Its subcellular location is the cell membrane. It is found in the secreted. The protein localises to the cell wall. Its function is as follows. Confers resistance to heavy metal ions (e.g. cadmium (CdCl(2)) and copper (CuCl(2))) by chelating them at the plasma membrane of root cells, thus stopping their entry and reducing their accumulation. The sequence is that of Protein CADMIUM TOLERANCE 1 from Digitaria ciliaris (Southern crabgrass).